The following is an 87-amino-acid chain: U3-theraphotoxin-Cg1b (87 aa).

Residues 1 to 23 (MRTFTLIAILTCAVLVIFHVSAA) form the signal peptide. A propeptide spanning residues 24–48 (EELEAQDVIQPEDIFTGVATLEEDR) is cleaved from the precursor. Intrachain disulfides connect C52–C65, C56–C79, and C73–C84.

Belongs to the neurotoxin 12 (Hwtx-2) family. 03 (juruin) subfamily. Expressed by the venom gland.

It is found in the secreted. In terms of biological role, probable ion channel inhibitor. The sequence is that of U3-theraphotoxin-Cg1b from Chilobrachys guangxiensis (Chinese earth tiger tarantula).